A 212-amino-acid chain; its full sequence is Transcription factor MYB8 (212 aa).

2 HTH myb-type domains span residues 9-61 (KAHM…INYL) and 62-116 (RPDL…KRKL). DNA-binding regions (H-T-H motif) lie at residues 37–61 (WRSLPKSVGLLRCGKSCRLRWINYL) and 89–112 (WSLIAGKLPGRTDNEIKNYWNTHI).

It localises to the nucleus. Transcription activator. This Arabidopsis thaliana (Mouse-ear cress) protein is Transcription factor MYB8.